The sequence spans 637 residues: Probable potassium transport system protein Kup (637 aa).

12 helical membrane passes run 25-45, 62-82, 115-135, 149-169, 180-200, 227-247, 263-283, 295-315, 352-372, 378-398, 410-430, and 434-454; these read ISLA…LYAI, VLGV…LKYL, WFLV…GMIT, IIAP…LTGL, VGAL…VLGL, LQGF…EALY, ILFV…LLLF, LVPS…TIIA, IYVP…VIGF, LAAA…ILFY, LATN…FGAS, and LFHG…LMLT.

It belongs to the HAK/KUP transporter (TC 2.A.72) family.

It localises to the cell inner membrane. The enzyme catalyses K(+)(in) + H(+)(in) = K(+)(out) + H(+)(out). Transport of potassium into the cell. Likely operates as a K(+):H(+) symporter. The polypeptide is Probable potassium transport system protein Kup (Chlorobium phaeobacteroides (strain DSM 266 / SMG 266 / 2430)).